Consider the following 504-residue polypeptide: Apoptosis inhibitor 5 (504 aa).

The segment at 1-360 is ARM-like and Heat-like helical repeats; sequence MPTVEELYRN…HQLGRKLPDF (360 aa). Lys251 is subject to N6-acetyllysine. The interval 370-391 is leucine-zipper; that stretch reads LKDFKIRLQYFARGLQVYIRQL. The residue at position 399 (Thr399) is a Phosphothreonine. The disordered stretch occupies residues 452–504; sequence GQKRTSEDTSSGSPPKKSPGGPKRDARQIYNPPSGKYSSNLSNFNYERSLQGK. The Nuclear localization signal signature appears at 454-475; sequence KRTSEDTSSGSPPKKSPGGPKR. Residues 461–472 are compositionally biased toward low complexity; sequence SSGSPPKKSPGG. 3 positions are modified to phosphoserine: Ser462, Ser464, and Ser469. Positions 487–504 are enriched in polar residues; that stretch reads KYSSNLSNFNYERSLQGK.

The protein belongs to the API5 family. As to quaternary structure, monomer. Interacts with FGF2 and ACIN1. In terms of processing, acetylation at Lys-251 impairs antiapoptotic function.

The protein localises to the nucleus. It localises to the cytoplasm. Its function is as follows. Antiapoptotic factor that may have a role in protein assembly. Negatively regulates ACIN1. By binding to ACIN1, it suppresses ACIN1 cleavage from CASP3 and ACIN1-mediated DNA fragmentation. Also known to efficiently suppress E2F1-induced apoptosis. This chain is Apoptosis inhibitor 5 (Api5), found in Mus musculus (Mouse).